Reading from the N-terminus, the 483-residue chain is Glutamate--tRNA ligase 1 (483 aa).

Residues 9–19 carry the 'HIGH' region motif; the sequence is PSPTGFLHIGG. Positions 238–242 match the 'KMSKS' region motif; the sequence is KLSKR. Residue lysine 241 coordinates ATP.

The protein belongs to the class-I aminoacyl-tRNA synthetase family. Glutamate--tRNA ligase type 1 subfamily. As to quaternary structure, monomer.

It localises to the cytoplasm. The enzyme catalyses tRNA(Glu) + L-glutamate + ATP = L-glutamyl-tRNA(Glu) + AMP + diphosphate. Functionally, catalyzes the attachment of glutamate to tRNA(Glu) in a two-step reaction: glutamate is first activated by ATP to form Glu-AMP and then transferred to the acceptor end of tRNA(Glu). The sequence is that of Glutamate--tRNA ligase 1 from Bartonella henselae (strain ATCC 49882 / DSM 28221 / CCUG 30454 / Houston 1) (Rochalimaea henselae).